The chain runs to 727 residues: MQQKTKLFLQALKYSIPHLGKCMQKQHLNHYNFADHYYNRIKLKKYHLTKCLQNKPKISELARNIPSRSFSCKDLQPVKQENEKPLPENMDAFEKVRTKLETQPQEEYEIINVEVKHGGFVYYQEGCCLVRSKDEEADNDNYEVLFNLEELKLDQPFIDCIRVAPDEKYVAAKIRTEDSEASTCVIIKLSDQPVMEASFPNVSSFEWVKDEEDEDVLFYTFQRNLRCHDVYRATFGDNKRNERFYTEKDPSYFVFLYLTKDSRFLTINIMNKTTSEVWLIDGLSPWDPPVLIQKRIHGVLYYVEHRDDELYILTNVGEPTEFKLMRTAADTPAIMNWDLFFTMKRNTKVIDLDMFKDHCVLFLKHSNLLYVNVIGLADDSVRSLKLPPWACGFIMDTNSDPKNCPFQLCSPIRSPKYYTYKFAEGKLFEETGHEDPITKTSRVLRLEAKSKDGKLVPMTVFHKTDSEDLQKKPLLIHVYGAYGMDLKMNFRPERRVLVDDGWILAYCHVRGGGELGLQWHADGRLTKKLNGLADLEACIKTLHGQGFSQPSLTTLTAFSAGGVLAGALCNCNPELLRAVTLEAPFLDVLNTMMDTTLPLTLEELEEWGNPSSDEKHKNYIKRYCPYQNIKPQHYPSVHITAYENDERVPLKGIVSYTEKLKEAISEHAKDTGEGYQAPNIILDIQPGGNHVIEDSHKKITAQIKFLYEELGLDSTSVFEDLKKYLKF.

Residues Ser559, Asp645, and His690 each act as charge relay system in the active site.

It belongs to the peptidase S9A family. As to quaternary structure, homodimer. Interacts with the AP-1 complex.

The protein resides in the cytoplasm. Its subcellular location is the cytosol. It localises to the golgi apparatus. The protein localises to the trans-Golgi network. It is found in the cytoskeleton. The protein resides in the nucleus. Serine peptidase whose precise substrate specificity remains unclear. Does not cleave peptides after a arginine or lysine residue. Regulates trans-Golgi network morphology and sorting by regulating the membrane binding of the AP-1 complex. May play a role in the regulation of synaptic vesicle exocytosis. This chain is Prolyl endopeptidase-like (PREPL), found in Macaca fascicularis (Crab-eating macaque).